Consider the following 106-residue polypeptide: Class II hydrophobin 6 (106 aa).

An N-terminal signal peptide occupies residues 1–16; it reads MQFFTVATLFLATAFA. 4 cysteine pairs are disulfide-bonded: Cys-36–Cys-86, Cys-47–Cys-77, Cys-48–Cys-60, and Cys-87–Cys-98.

This sequence belongs to the cerato-ulmin hydrophobin family. As to quaternary structure, homodimer. Homodimers further self-assemble to form highly ordered films at water-air interfaces through intermolecular interactions.

Its subcellular location is the secreted. The protein resides in the cell wall. In terms of biological role, aerial growth, conidiation, and dispersal of filamentous fungi in the environment rely upon a capability of their secreting small amphipathic proteins called hydrophobins (HPBs) with low sequence identity. Class I can self-assemble into an outermost layer of rodlet bundles on aerial cell surfaces, conferring cellular hydrophobicity that supports fungal growth, development and dispersal; whereas Class II form highly ordered films at water-air interfaces through intermolecular interactions but contribute nothing to the rodlet structure. HFB2-6 is a class II hydrophobin that has a function in root colonization. Acts as an effector in poplar by up-regulating the expression of genes related to both the jasmonic acid and salicylic acid signal transduction pathways, which not only causes induced systemic resistance (ISR), but also systemic acquired resistance (SAR), giving poplar broad-spectrum resistance to pathogens. Also induces genes related to auxin signal transduction to promote poplar growth. Plays roles in interactions with both biotic and abiotic environmental conditions such as the presence of the pathogen Alternaria alternata or nutrient starvation conditions. The protein is Class II hydrophobin 6 of Trichoderma asperellum (strain ATCC 204424 / CBS 433.97 / NBRC 101777).